A 359-amino-acid polypeptide reads, in one-letter code: Histidinol-phosphate aminotransferase (359 aa).

Residue K217 is modified to N6-(pyridoxal phosphate)lysine.

It belongs to the class-II pyridoxal-phosphate-dependent aminotransferase family. Histidinol-phosphate aminotransferase subfamily. In terms of assembly, homodimer. The cofactor is pyridoxal 5'-phosphate.

It carries out the reaction L-histidinol phosphate + 2-oxoglutarate = 3-(imidazol-4-yl)-2-oxopropyl phosphate + L-glutamate. It functions in the pathway amino-acid biosynthesis; L-histidine biosynthesis; L-histidine from 5-phospho-alpha-D-ribose 1-diphosphate: step 7/9. The protein is Histidinol-phosphate aminotransferase of Salmonella arizonae (strain ATCC BAA-731 / CDC346-86 / RSK2980).